We begin with the raw amino-acid sequence, 179 residues long: ATP synthase subunit delta (179 aa).

This sequence belongs to the ATPase delta chain family. In terms of assembly, F-type ATPases have 2 components, F(1) - the catalytic core - and F(0) - the membrane proton channel. F(1) has five subunits: alpha(3), beta(3), gamma(1), delta(1), epsilon(1). F(0) has three main subunits: a(1), b(2) and c(10-14). The alpha and beta chains form an alternating ring which encloses part of the gamma chain. F(1) is attached to F(0) by a central stalk formed by the gamma and epsilon chains, while a peripheral stalk is formed by the delta and b chains.

The protein localises to the cell membrane. F(1)F(0) ATP synthase produces ATP from ADP in the presence of a proton or sodium gradient. F-type ATPases consist of two structural domains, F(1) containing the extramembraneous catalytic core and F(0) containing the membrane proton channel, linked together by a central stalk and a peripheral stalk. During catalysis, ATP synthesis in the catalytic domain of F(1) is coupled via a rotary mechanism of the central stalk subunits to proton translocation. Functionally, this protein is part of the stalk that links CF(0) to CF(1). It either transmits conformational changes from CF(0) to CF(1) or is implicated in proton conduction. This Listeria innocua serovar 6a (strain ATCC BAA-680 / CLIP 11262) protein is ATP synthase subunit delta.